A 297-amino-acid polypeptide reads, in one-letter code: ER membrane protein complex subunit 2-B (297 aa).

TPR repeat units follow at residues 87–120 (HRVKRLTGLRFEAMERYDDALQIYDRILQDDPTN), 155–188 (QEAWHELAELYINELDYAKAAFCLEELILTNPHN), and 192–225 (YQQFAEVKYTQGGLENLELSRKYFSQALKLNNHS).

Belongs to the EMC2 family. In terms of assembly, component of the ER membrane protein complex (EMC).

It localises to the endoplasmic reticulum membrane. In terms of biological role, part of the endoplasmic reticulum membrane protein complex (EMC) that enables the energy-independent insertion into endoplasmic reticulum membranes of newly synthesized membrane proteins. Preferentially accommodates proteins with transmembrane domains that are weakly hydrophobic or contain destabilizing features such as charged and aromatic residues. Involved in the cotranslational insertion of multi-pass membrane proteins in which stop-transfer membrane-anchor sequences become ER membrane spanning helices. It is also required for the post-translational insertion of tail-anchored/TA proteins in endoplasmic reticulum membranes. By mediating the proper cotranslational insertion of N-terminal transmembrane domains in an N-exo topology, with translocated N-terminus in the lumen of the ER, controls the topology of multi-pass membrane proteins. By regulating the insertion of various proteins in membranes, it is indirectly involved in many cellular processes. The protein is ER membrane protein complex subunit 2-B (emc2-b) of Xenopus laevis (African clawed frog).